The sequence spans 79 residues: Probable [Fe-S]-dependent transcriptional repressor (79 aa).

Positions 56, 61, 64, and 70 each coordinate iron-sulfur cluster.

It belongs to the FeoC family.

Its function is as follows. May function as a transcriptional regulator that controls feoABC expression. The sequence is that of Probable [Fe-S]-dependent transcriptional repressor from Serratia proteamaculans (strain 568).